Here is an 89-residue protein sequence, read N- to C-terminus: MEIPKLLYIAVIAIGLSGSLTCATPLANPWGDPEAEANPEAKATAEATAEAIAEALAEPEPALPALPLLMFLFTLPALQHWIEKNWING.

An N-terminal signal peptide occupies residues 1 to 22 (MEIPKLLYIAVIAIGLSGSLTC). A propeptide spanning residues 23 to 61 (ATPLANPWGDPEAEANPEAKATAEATAEAIAEALAEPEP) is cleaved from the precursor. The residue at position 88 (asparagine 88) is an Asparagine amide.

This sequence belongs to the formicidae venom clade 1 family. As to expression, expressed by the venom gland.

It localises to the secreted. In terms of biological role, toxin that potently modulates mammalian voltage-gated sodium (Nav) channels, reducing the voltage threshold for activation and inhibiting channel inactivation. Shows activity on hNav1.6/SCN8A (EC(50)=176 nM), mNav1.7/SCN9A (EC(50)=102 nM) and hNav1.7 (EC(50)=154 nM). In vivo, causes spontaneous, gradual and long-lasting nocifensive behaviors by intraplantar injection in mice, as well as pronounced swelling of the injected paw. Does not have effect on insects (blowflies). The protein is Myrmicitoxin(1)-Pm2a of Pogonomyrmex maricopa (Maricopa harvester ant).